The following is a 343-amino-acid chain: Chlorophyll(ide) b reductase NOL, chloroplastic (343 aa).

The transit peptide at 1 to 54 (MAATAAYLPLRAQAQVGLAPLRPSGSAAAGARLPGRTARRRLAARGGPEAAGIR) directs the protein to the chloroplast. 78-102 (ITGSTKGIGYALAKEFLKAGDNVVI) is an NAD(+) binding site. The active-site Proton acceptor is Tyr228.

This sequence belongs to the short-chain dehydrogenases/reductases (SDR) family. In terms of assembly, interacts with NCY1 to form a complex that acts as a chlorophyll b reductase. As to expression, expressed in leaves and stems. Also detected in non-photosynthetic tissues such as roots.

The protein resides in the plastid. The protein localises to the chloroplast thylakoid membrane. It catalyses the reaction 7(1)-hydroxychlorophyllide a + NAD(+) = chlorophyllide b + NADH + H(+). It carries out the reaction 7(1)-hydroxychlorophyllide a + NADP(+) = chlorophyllide b + NADPH + H(+). In terms of biological role, required for chlorophyll b degradation. This chain is Chlorophyll(ide) b reductase NOL, chloroplastic (NOL), found in Oryza sativa subsp. japonica (Rice).